The sequence spans 309 residues: Sodium/potassium-transporting ATPase subunit beta-1 (309 aa).

Over 1 to 45 the chain is Cytoplasmic; sequence MSKNNGKGAKGEFEFPQPAKKQTFSEMIYNPQEGTFFGRTGKSWS. Residues 46 to 66 form a helical; Signal-anchor for type II membrane protein membrane-spanning segment; that stretch reads QLLLFYTIFYIVLAALFTICM. At 67–309 the chain is on the extracellular side; the sequence is QGLLSTISDT…GSVTFQILLD (243 aa). The N-linked (GlcNAc...) asparagine glycan is linked to N133. 2 disulfide bridges follow: C143-C155 and C165-C179. The N-linked (GlcNAc...) asparagine glycan is linked to N211. A disulfide bridge links C225 with C282.

It belongs to the X(+)/potassium ATPases subunit beta family. The sodium/potassium-transporting ATPase is composed of a catalytic alpha subunit, an auxiliary non-catalytic beta subunit and an additional regulatory subunit. Interacts with nkain. In terms of tissue distribution, in embryos, it is expressed in the neurons of the CNS and PNS, in Garland cells and posterior spiracles. In adults, it is concentrated in the thorax and abdomen (muscle tissue, digestive system and Malpighian tubules) and weakly expressed in the head. Expression is diffuse in the nervous system.

It localises to the cell membrane. Its function is as follows. This is the non-catalytic component of the active enzyme, which catalyzes the hydrolysis of ATP coupled with the exchange of Na(+) and K(+) ions across the plasma membrane. The beta subunit regulates, through assembly of alpha/beta heterodimers, the number of sodium pumps transported to the plasma membrane. This is Sodium/potassium-transporting ATPase subunit beta-1 (nrv1) from Drosophila melanogaster (Fruit fly).